A 153-amino-acid chain; its full sequence is General odorant-binding protein lush (153 aa).

The signal sequence occupies residues 1 to 29 (MKHWKRRSSAVFAIVLQVLVLLLPDPAVA). 3 cysteine pairs are disulfide-bonded: cysteine 46-cysteine 79, cysteine 75-cysteine 132, and cysteine 121-cysteine 141. 2 residues coordinate 1-propanol: serine 81 and threonine 86. Butan-1-ol is bound by residues serine 81 and threonine 86. Serine 81 and threonine 86 together coordinate ethanol.

The protein belongs to the PBP/GOBP family. Specifically expressed in chemosensory system in both males and females. Expressed in a subset of trichoid chemosensory sensilla located on the ventral-lateral surface of the third antennal segment. Secreted from non-neuronal support cells into the sensillum lymph that bathes the olfactory neurons within these sensilla.

It localises to the secreted. Odorant-binding protein required for olfactory behavior and for activity of pheromone-sensitive neurons. Binds to alcohols and mediates avoidance behavior to high concentrations of alcohols, the alcohol-binding possibly resulting in activation of receptors on T2B neurons, the activation of these receptors inhibiting these neurons. Acts in concert with Snmp and lush to capture cVA molecules on the surface of Or67d expressing olfactory dendrites and facilitate their transfer to the odorant-receptor Orco complex. Required for cVA response, probably by binding to VA. May act by serving as an adapter that bridges the presence of gaseous pheromone molecules, cVA, to activation of specific neuronal receptors expressed on T1 olfactory neurons, possibly via a specific conformational change induced by cVA that in turn activates T1 receptors. T1 neurons are excited by the pheromone VA, while T2 neurons are inhibited by alcohols. Also binds to phthalates. The chain is General odorant-binding protein lush (lush) from Drosophila melanogaster (Fruit fly).